Reading from the N-terminus, the 244-residue chain is INO80 complex subunit E (244 aa).

A coiled-coil region spans residues 10–54; it reads DYKKKYRNLKRKLKFLIYEHECFQEELRKAQRKLLKVSRDKSFLL. Positions 63 to 236 are disordered; sequence VDEDSSDSDA…SGDDALDGDD (174 aa). Residues 99–115 are compositionally biased toward low complexity; the sequence is PPLGGAPSPSSLSLPPS. Over residues 157–171 the composition is skewed to basic residues; it reads RPKREKRPRLPRKLK. Residues Lys-159 and Lys-171 each participate in a glycyl lysine isopeptide (Lys-Gly) (interchain with G-Cter in SUMO2) cross-link. The span at 202–212 shows a compositional bias: pro residues; it reads PLPPPKMPPPT.

In terms of assembly, component of the chromatin remodeling INO80 complex; specifically part of a complex module associated with the N-terminus of INO80.

The protein localises to the nucleus. Putative regulatory component of the chromatin remodeling INO80 complex which is involved in transcriptional regulation, DNA replication and probably DNA repair. The polypeptide is INO80 complex subunit E (INO80E) (Homo sapiens (Human)).